The following is a 1025-amino-acid chain: Probable outer membrane protein PmpF (1025 aa).

A signal peptide spans 1–20 (MTRRILPLSLVFIPLSCISA). The disordered stretch occupies residues 654–681 (NSTETQTANNSIQEQKNTSETFDSNSTT). The span at 659 to 681 (QTANNSIQEQKNTSETFDSNSTT) shows a compositional bias: polar residues. Positions 748–1025 (LLPDDSWFAL…YMNAGGALVF (278 aa)) constitute an Autotransporter domain.

Belongs to the PMP outer membrane protein family.

Its subcellular location is the secreted. It is found in the cell wall. The protein localises to the cell outer membrane. The sequence is that of Probable outer membrane protein PmpF (pmpF) from Chlamydia muridarum (strain MoPn / Nigg).